A 124-amino-acid chain; its full sequence is SPbeta prophage-derived uncharacterized protein YoqO (124 aa).

2 consecutive transmembrane segments (helical) span residues 54-74 (LVVI…LLSF) and 88-108 (VIFI…ISIM).

Its subcellular location is the cell membrane. This Bacillus subtilis (strain 168) protein is SPbeta prophage-derived uncharacterized protein YoqO (yoqO).